The primary structure comprises 290 residues: Dihydroorotate dehydrogenase B (NAD(+)), catalytic subunit (290 aa).

FMN-binding positions include Ser17 and Lys42–Thr43. Residues Lys42, Asn67 to Leu71, and Asn117 each bind substrate. Asn117 is a binding site for FMN. The active-site Nucleophile is the Ser120. 2 residues coordinate FMN: Lys152 and Ile177. Substrate is bound at residue Asn178–Thr179. FMN-binding positions include Gly203, Gly229–Gly230, and Gly251–Thr252.

The protein belongs to the dihydroorotate dehydrogenase family. Type 1 subfamily. As to quaternary structure, heterotetramer of 2 PyrK and 2 PyrD type B subunits. The cofactor is FMN.

Its subcellular location is the cytoplasm. The catalysed reaction is (S)-dihydroorotate + NAD(+) = orotate + NADH + H(+). Its pathway is pyrimidine metabolism; UMP biosynthesis via de novo pathway; orotate from (S)-dihydroorotate (NAD(+) route): step 1/1. Catalyzes the conversion of dihydroorotate to orotate with NAD(+) as electron acceptor. This Saccharolobus solfataricus (strain ATCC 35092 / DSM 1617 / JCM 11322 / P2) (Sulfolobus solfataricus) protein is Dihydroorotate dehydrogenase B (NAD(+)), catalytic subunit (pyrD).